Here is a 1150-residue protein sequence, read N- to C-terminus: GPI inositol-deacylase (1150 aa).

The segment at 1-43 (MQGRPNGASGDPNPRNDTSVTIDSDSDNGSRHRIAEVRGSSPS) is disordered. Asn-16 and Asn-28 each carry an N-linked (GlcNAc...) asparagine glycan. The helical transmembrane segment at 122–142 (ICSGLVLFVTVSALLILSIIV) threads the bilayer. The active site involves Ser-309. A helical transmembrane segment spans residues 790–810 (LAMRYRTVFAAFPLLVVSLVL). Asn-818 carries an N-linked (GlcNAc...) asparagine glycan. The helical transmembrane segment at 829 to 849 (ALDLCIRSSIPLLFLGLTFLA) threads the bilayer. Asn-870 carries N-linked (GlcNAc...) asparagine glycosylation. The helical transmembrane segment at 890–910 (AFFWFLVPLFGIISIGTCVIV) threads the bilayer. Asn-942 carries N-linked (GlcNAc...) asparagine glycosylation. 5 helical membrane passes run 960 to 980 (VLLL…VACV), 1010 to 1030 (SIFI…IVWI), 1047 to 1067 (VFSI…TMIP), 1079 to 1099 (VLFF…AYLL), and 1102 to 1122 (ITNL…GFSL). Residues Asn-1124 and Asn-1130 are each glycosylated (N-linked (GlcNAc...) asparagine).

Belongs to the GPI inositol-deacylase family.

The protein resides in the endoplasmic reticulum membrane. Its function is as follows. Involved in inositol deacylation of GPI-anchored proteins which plays important roles in the quality control and ER-associated degradation of GPI-anchored proteins. The polypeptide is GPI inositol-deacylase (BST1) (Coccidioides immitis (strain RS) (Valley fever fungus)).